The primary structure comprises 418 residues: Multidrug resistance protein MdtG (418 aa).

The next 11 membrane-spanning stretches (helical) occupy residues 19 to 39 (IGCFLTGAAFSLVMPFLPLYV), 56 to 76 (LVFSITFLFSAIASPFWGGLA), 90 to 110 (LGMAIVMLLMGLAQNIWQFLI), 113 to 133 (ALLGLLGGFIPNANALIATQI), 144 to 164 (TLSTGGVSGALLGPLVGGVLA), 171 to 191 (PVFFMTASVLFLCFLLTLLFI), 222 to 242 (LFVTTLIIQVATGSIAPILTL), 251 to 271 (VANIAFISGMIASVPGVAALI), 288 to 308 (ILIAALVISVLLLIPMSFVQT), 317 to 337 (FLLGAADGALLPAVQTLLVYN), and 376 to 396 (AVFLVTAMVVLFNAVYTGLSL).

Belongs to the major facilitator superfamily. DHA1 family. MdtG (TC 2.A.1.2.20) subfamily.

Its subcellular location is the cell inner membrane. The sequence is that of Multidrug resistance protein MdtG from Enterobacter lignolyticus (strain SCF1).